Consider the following 94-residue polypeptide: MLKPXGDRVVLKIEEKEQTVGGFVLAGSAQEKTKTAQVVATGQGVRTLNGDLVAPSVKTGDRVLVEAHAGLDVKDGDEKYIIVGEANILAIIEE.

This sequence belongs to the GroES chaperonin family. In terms of assembly, heptamer of 7 subunits arranged in a ring. Interacts with the chaperonin GroEL.

It is found in the cytoplasm. In terms of biological role, together with the chaperonin GroEL, plays an essential role in assisting protein folding. The GroEL-GroES system forms a nano-cage that allows encapsulation of the non-native substrate proteins and provides a physical environment optimized to promote and accelerate protein folding. GroES binds to the apical surface of the GroEL ring, thereby capping the opening of the GroEL channel. The sequence is that of Co-chaperonin GroES from Streptococcus pneumoniae serotype 19F (strain G54).